Reading from the N-terminus, the 86-residue chain is MDPYKVIIRPVVTEKAISLIEKENKLTFIVDRRATKTDIKKAIEEIFNVKVEKVNTLITPKGEKKAYVKLKPEYSASEIAARLGLF.

It belongs to the universal ribosomal protein uL23 family. Part of the 50S ribosomal subunit. Contacts protein L29.

In terms of biological role, binds to 23S rRNA. One of the proteins that surrounds the polypeptide exit tunnel on the outside of the ribosome. The chain is Large ribosomal subunit protein uL23 from Pyrococcus horikoshii (strain ATCC 700860 / DSM 12428 / JCM 9974 / NBRC 100139 / OT-3).